Reading from the N-terminus, the 179-residue chain is Large ribosomal subunit protein uL5 (179 aa).

Belongs to the universal ribosomal protein uL5 family. As to quaternary structure, part of the 50S ribosomal subunit; part of the 5S rRNA/L5/L18/L25 subcomplex. Contacts the 5S rRNA and the P site tRNA. Forms a bridge to the 30S subunit in the 70S ribosome.

Functionally, this is one of the proteins that bind and probably mediate the attachment of the 5S RNA into the large ribosomal subunit, where it forms part of the central protuberance. In the 70S ribosome it contacts protein S13 of the 30S subunit (bridge B1b), connecting the 2 subunits; this bridge is implicated in subunit movement. Contacts the P site tRNA; the 5S rRNA and some of its associated proteins might help stabilize positioning of ribosome-bound tRNAs. This is Large ribosomal subunit protein uL5 from Francisella tularensis subsp. tularensis (strain SCHU S4 / Schu 4).